The following is a 1369-amino-acid chain: Rho guanine nucleotide exchange factor 10 (1369 aa).

Residues 1–106 (MRPPGFLSRA…ETTPVAEPTK (106 aa)) form a disordered region. Residues 46-64 (NNEEEEGEQFDFDSGDEIP) are compositionally biased toward acidic residues. Residues 83-100 (EAPAPTGGEDGAGAETTP) show a composition bias toward low complexity. At Ser180 the chain carries Phosphoserine. Positions 184–254 (EAETPEVTED…ENSDSEPDEM (71 aa)) are disordered. The span at 196–209 (PNSLSSEEPPTSED) shows a compositional bias: polar residues. Positions 304 to 355 (KKQLSHDLTRLKEHYEKKMRDLMASTVGVVEIQQLRQKHELKMQKLVKAAKD) form a coiled coil. Ser379 carries the post-translational modification Phosphoserine. Residues 421-608 (VRRYILGSVV…ETLAEKLNER (188 aa)) form the DH domain. Disordered regions lie at residues 1226 to 1260 (KDKS…LSQG) and 1277 to 1297 (QKSD…SSSL). The segment covering 1279-1296 (SDLSSSSGSLSLSHGSSS) has biased composition (low complexity). Residue Ser1287 is modified to Phosphoserine. The residue at position 1338 (Gln1338) is an N5-methylglutamine.

Post-translationally, methylated at Gln-1338 by N6AMT1.

Its function is as follows. May play a role in developmental myelination of peripheral nerves. The chain is Rho guanine nucleotide exchange factor 10 (ARHGEF10) from Homo sapiens (Human).